A 291-amino-acid polypeptide reads, in one-letter code: ATP synthase gamma chain (291 aa).

The protein belongs to the ATPase gamma chain family. F-type ATPases have 2 components, CF(1) - the catalytic core - and CF(0) - the membrane proton channel. CF(1) has five subunits: alpha(3), beta(3), gamma(1), delta(1), epsilon(1). CF(0) has three main subunits: a, b and c.

It is found in the cell inner membrane. Functionally, produces ATP from ADP in the presence of a proton gradient across the membrane. The gamma chain is believed to be important in regulating ATPase activity and the flow of protons through the CF(0) complex. This Ralstonia nicotianae (strain ATCC BAA-1114 / GMI1000) (Ralstonia solanacearum) protein is ATP synthase gamma chain.